Here is a 138-residue protein sequence, read N- to C-terminus: MNIIDRFEQENISKRTANKKIPDFEAGDTVKVTVKIVDRSIEKDGKEKLTERFQAYEGVVIAKRNRSITSSFLVRKISHGEGVERRFMTYSPIVHSIDVVKYGVVRRAKLYYLRNRSGKSARIKERHIPIAKTKAAKA.

It belongs to the bacterial ribosomal protein bL19 family.

In terms of biological role, this protein is located at the 30S-50S ribosomal subunit interface and may play a role in the structure and function of the aminoacyl-tRNA binding site. The chain is Large ribosomal subunit protein bL19 from Rickettsia peacockii (strain Rustic).